The following is a 67-amino-acid chain: ATP synthase protein 8 (67 aa).

The helical transmembrane segment at 8–24 threads the bilayer; it reads TWFTTVLSTTITLFILM. At lysine 54 the chain carries N6-acetyllysine; alternate. Lysine 54 carries the post-translational modification N6-succinyllysine; alternate. Lysine 57 carries the N6-acetyllysine modification.

The protein belongs to the ATPase protein 8 family. In terms of assembly, F-type ATPases have 2 components, CF(1) - the catalytic core - and CF(0) - the membrane proton channel. Component of an ATP synthase complex composed of ATP5PB, ATP5MC1, ATP5F1E, ATP5PD, ATP5ME, ATP5PF, ATP5MF, MT-ATP6, MT-ATP8, ATP5F1A, ATP5F1B, ATP5F1D, ATP5F1C, ATP5PO, ATP5MG, ATP5MK and ATP5MJ. Interacts with PRICKLE3.

The protein localises to the mitochondrion membrane. Its function is as follows. Mitochondrial membrane ATP synthase (F(1)F(0) ATP synthase or Complex V) produces ATP from ADP in the presence of a proton gradient across the membrane which is generated by electron transport complexes of the respiratory chain. F-type ATPases consist of two structural domains, F(1) - containing the extramembraneous catalytic core and F(0) - containing the membrane proton channel, linked together by a central stalk and a peripheral stalk. During catalysis, ATP synthesis in the catalytic domain of F(1) is coupled via a rotary mechanism of the central stalk subunits to proton translocation. Part of the complex F(0) domain. Minor subunit located with subunit a in the membrane. This is ATP synthase protein 8 (MT-ATP8) from Microtus pennsylvanicus (Meadow vole).